Consider the following 297-residue polypeptide: Ezy-1 protein (297 aa).

Disordered regions lie at residues M1–G34, F115–S151, and Q255–M297. Positions A123–E135 are enriched in acidic residues. Positions A136 to S150 are enriched in low complexity. Residues D259–E269 show a composition bias toward basic and acidic residues.

This Chlamydomonas reinhardtii (Chlamydomonas smithii) protein is Ezy-1 protein (Ezy-1).